A 149-amino-acid polypeptide reads, in one-letter code: F420H(2)-dependent quinone reductase MT1299 (149 aa).

Coenzyme F420-(gamma-Glu)n is bound by residues 48–50 (AKT), 54–59 (RTTSLT), 70–73 (VASK), 81–85 (GWYHN), and Tyr-130.

It belongs to the F420H(2)-dependent quinone reductase family.

Its subcellular location is the cell membrane. It catalyses the reaction oxidized coenzyme F420-(gamma-L-Glu)(n) + a quinol + H(+) = reduced coenzyme F420-(gamma-L-Glu)(n) + a quinone. Functionally, involved in a F420-dependent anti-oxidant mechanism that protects M.tuberculosis against oxidative stress and bactericidal agents. Catalyzes the F420H(2)-dependent two-electron reduction of quinones to dihydroquinones, thereby preventing the formation of cytotoxic semiquinones obtained by the one-electron reduction pathway. In vitro, catalyzes the reduction of menadione to menadiol; since menaquinone is the sole quinone electron carrier in the respiratory chain in M.tuberculosis, the physiological electron acceptor for Fqr-mediated F420H(2) oxidation is therefore likely to be the endogenous menaquinone found in the membrane fraction of M.tuberculosis. The polypeptide is F420H(2)-dependent quinone reductase MT1299 (Mycobacterium tuberculosis (strain CDC 1551 / Oshkosh)).